We begin with the raw amino-acid sequence, 226 residues long: ATP synthase F(0) complex subunit a (226 aa).

6 helical membrane passes run 11–31, 68–88, 97–117, 138–158, 164–184, and 189–209; these read APSMMGLPIVVLIVMFPSILF, WALMLMSLILFIGSTNLLGLL, QLSMNLGMAIPLWAGTVITGF, IPMLVVIETISLFIQPMALAV, ITAGHLLIHLIGGATLALINI, and AFITFIILILLTILEFAVALI.

Belongs to the ATPase A chain family. Component of the ATP synthase complex composed at least of ATP5F1A/subunit alpha, ATP5F1B/subunit beta, ATP5MC1/subunit c (homooctomer), MT-ATP6/subunit a, MT-ATP8/subunit 8, ATP5ME/subunit e, ATP5MF/subunit f, ATP5MG/subunit g, ATP5MK/subunit k, ATP5MJ/subunit j, ATP5F1C/subunit gamma, ATP5F1D/subunit delta, ATP5F1E/subunit epsilon, ATP5PF/subunit F6, ATP5PB/subunit b, ATP5PD/subunit d, ATP5PO/subunit OSCP. ATP synthase complex consists of a soluble F(1) head domain (subunits alpha(3) and beta(3)) - the catalytic core - and a membrane F(0) domain - the membrane proton channel (subunits c, a, 8, e, f, g, k and j). These two domains are linked by a central stalk (subunits gamma, delta, and epsilon) rotating inside the F1 region and a stationary peripheral stalk (subunits F6, b, d, and OSCP). Interacts with DNAJC30; interaction is direct.

It is found in the mitochondrion inner membrane. It catalyses the reaction H(+)(in) = H(+)(out). Functionally, subunit a, of the mitochondrial membrane ATP synthase complex (F(1)F(0) ATP synthase or Complex V) that produces ATP from ADP in the presence of a proton gradient across the membrane which is generated by electron transport complexes of the respiratory chain. ATP synthase complex consist of a soluble F(1) head domain - the catalytic core - and a membrane F(1) domain - the membrane proton channel. These two domains are linked by a central stalk rotating inside the F(1) region and a stationary peripheral stalk. During catalysis, ATP synthesis in the catalytic domain of F(1) is coupled via a rotary mechanism of the central stalk subunits to proton translocation. With the subunit c (ATP5MC1), forms the proton-conducting channel in the F(0) domain, that contains two crucial half-channels (inlet and outlet) that facilitate proton movement from the mitochondrial intermembrane space (IMS) into the matrix. Protons are taken up via the inlet half-channel and released through the outlet half-channel, following a Grotthuss mechanism. The chain is ATP synthase F(0) complex subunit a from Canis lupus familiaris (Dog).